Here is a 180-residue protein sequence, read N- to C-terminus: Stathmin-3 (180 aa).

Residues cysteine 22 and cysteine 24 are each lipidated (S-palmitoyl cysteine). Positions 38–180 (GDMEVKQLDK…NKEQREEMSG (143 aa)) constitute an SLD domain. Phosphoserine is present on residues serine 50, serine 60, serine 65, serine 68, serine 72, serine 73, and serine 81. A compositionally biased stretch (low complexity) spans 60-74 (SPSDLSPESPVLSSP). The tract at residues 60-81 (SPSDLSPESPVLSSPPKRKDAS) is disordered. Positions 75–179 (PKRKDASLEE…RNKEQREEMS (105 aa)) form a coiled coil.

This sequence belongs to the stathmin family. Interacts with STAT3. Interacts with CLU (secreted form); this interaction may act as an important modulator during neuronal differentiation. N-terminal palmitoylation promotes specific anchoring to the cytosolic leaflet of Golgi membranes and subsequent vesicular trafficking along dendrites and axons. Neuronal Stathmins are substrates for palmitoyltransferases ZDHHC3, ZDHHC7 and ZDHHC15. Neuron specific.

The protein resides in the golgi apparatus. The protein localises to the cell projection. It is found in the growth cone. It localises to the axon. Its subcellular location is the cytoplasm. The protein resides in the cytosol. Its function is as follows. Exhibits microtubule-destabilizing activity, which is antagonized by STAT3. The protein is Stathmin-3 (Stmn3) of Mus musculus (Mouse).